The primary structure comprises 519 residues: T-complex protein 11-like protein 2 (519 aa).

Residues M1–P57 are disordered. Position 16 is a phosphoserine (S16). Composition is skewed to low complexity over residues D17 to S29 and S36 to S55.

It belongs to the TCP11 family. In terms of assembly, interacts with FMNL2; this interaction promotes muscle-derived satellite cell (MDSC) migration and differentiation.

The protein localises to the cytoplasm. Its subcellular location is the cytoskeleton. Promotes the migration of muscle-derived satellite cells (MDSCs) during differentiation throught interaction with FMNL2 and therefore may participate in microfilament assembly. This Bos taurus (Bovine) protein is T-complex protein 11-like protein 2.